A 221-amino-acid polypeptide reads, in one-letter code: MEQEQKATQEQATYEEWTAPEPQEEKAEERGGNEPQEENAENLQQENTQAQQEALEEQPKAEQEQNDELAAANAKNCRTRSEDKRNGNRYLRLYADFENFRRRTRQEMEAAEKYRAQSLVSDLLPALDNFERALKIETENEQAKSILQGMEMVYRSVLDALKKEGVEAIEAVGKPFDPHLHQAVMQVEDSNYEPNTVVEEFQKGYKLKDRVIRPAMVKVSQ.

The interval 1 to 83 (MEQEQKATQE…AKNCRTRSED (83 aa)) is disordered. Positions 23–32 (QEEKAEERGG) are enriched in basic and acidic residues. A compositionally biased stretch (low complexity) spans 41–53 (ENLQQENTQAQQE).

The protein belongs to the GrpE family. As to quaternary structure, homodimer.

Its subcellular location is the cytoplasm. In terms of biological role, participates actively in the response to hyperosmotic and heat shock by preventing the aggregation of stress-denatured proteins, in association with DnaK and GrpE. It is the nucleotide exchange factor for DnaK and may function as a thermosensor. Unfolded proteins bind initially to DnaJ; upon interaction with the DnaJ-bound protein, DnaK hydrolyzes its bound ATP, resulting in the formation of a stable complex. GrpE releases ADP from DnaK; ATP binding to DnaK triggers the release of the substrate protein, thus completing the reaction cycle. Several rounds of ATP-dependent interactions between DnaJ, DnaK and GrpE are required for fully efficient folding. The protein is Protein GrpE of Geobacillus stearothermophilus (Bacillus stearothermophilus).